Consider the following 352-residue polypeptide: Protein RecA (352 aa).

64–71 is an ATP binding site; sequence GPESSGKT. Residues 328–352 form a disordered region; the sequence is NPSSVPEAEAEHDPEQDEEPTFDLE. A compositionally biased stretch (acidic residues) spans 335-352; it reads AEAEHDPEQDEEPTFDLE.

Belongs to the RecA family.

The protein resides in the cytoplasm. In terms of biological role, can catalyze the hydrolysis of ATP in the presence of single-stranded DNA, the ATP-dependent uptake of single-stranded DNA by duplex DNA, and the ATP-dependent hybridization of homologous single-stranded DNAs. It interacts with LexA causing its activation and leading to its autocatalytic cleavage. In Brevibacillus brevis (strain 47 / JCM 6285 / NBRC 100599), this protein is Protein RecA.